A 353-amino-acid chain; its full sequence is Photosystem II protein D1 (353 aa).

Thr2 carries the post-translational modification N-acetylthreonine. At Thr2 the chain carries Phosphothreonine. 3 helical membrane-spanning segments follow: residues 29-46 (YIGW…TATS), 118-133 (HFLL…EWEL), and 142-156 (WIAV…AATA). A chlorophyll a-binding site is contributed by His118. Tyr126 serves as a coordination point for pheophytin a. Asp170 and Glu189 together coordinate [CaMn4O5] cluster. A helical transmembrane segment spans residues 197-218 (FHMLGVAGVFGGSLFSAMHGSL). His198 is a chlorophyll a binding site. A quinone contacts are provided by residues His215 and 264–265 (SF). His215 contacts Fe cation. His272 lines the Fe cation pocket. Residues 274–288 (FLAAWPVVGIWFTAL) traverse the membrane as a helical segment. Positions 332, 333, 342, and 344 each coordinate [CaMn4O5] cluster. A propeptide spanning residues 345-353 (AVEVPAING) is cleaved from the precursor.

Belongs to the reaction center PufL/M/PsbA/D family. In terms of assembly, PSII is composed of 1 copy each of membrane proteins PsbA, PsbB, PsbC, PsbD, PsbE, PsbF, PsbH, PsbI, PsbJ, PsbK, PsbL, PsbM, PsbT, PsbX, PsbY, PsbZ, Psb30/Ycf12, at least 3 peripheral proteins of the oxygen-evolving complex and a large number of cofactors. It forms dimeric complexes. The cofactor is The D1/D2 heterodimer binds P680, chlorophylls that are the primary electron donor of PSII, and subsequent electron acceptors. It shares a non-heme iron and each subunit binds pheophytin, quinone, additional chlorophylls, carotenoids and lipids. D1 provides most of the ligands for the Mn4-Ca-O5 cluster of the oxygen-evolving complex (OEC). There is also a Cl(-1) ion associated with D1 and D2, which is required for oxygen evolution. The PSII complex binds additional chlorophylls, carotenoids and specific lipids.. Tyr-161 forms a radical intermediate that is referred to as redox-active TyrZ, YZ or Y-Z. Post-translationally, C-terminally processed by CTPA; processing is essential to allow assembly of the oxygen-evolving complex and thus photosynthetic growth.

The protein resides in the plastid. The protein localises to the chloroplast thylakoid membrane. The enzyme catalyses 2 a plastoquinone + 4 hnu + 2 H2O = 2 a plastoquinol + O2. Its function is as follows. Photosystem II (PSII) is a light-driven water:plastoquinone oxidoreductase that uses light energy to abstract electrons from H(2)O, generating O(2) and a proton gradient subsequently used for ATP formation. It consists of a core antenna complex that captures photons, and an electron transfer chain that converts photonic excitation into a charge separation. The D1/D2 (PsbA/PsbD) reaction center heterodimer binds P680, the primary electron donor of PSII as well as several subsequent electron acceptors. The chain is Photosystem II protein D1 from Hordeum vulgare (Barley).